Reading from the N-terminus, the 407-residue chain is Zinc finger protein 174 (407 aa).

Residues 1–20 (MAAKMEITLSSNTEASSKQE) form a disordered region. Lys-26 participates in a covalent cross-link: Glycyl lysine isopeptide (Lys-Gly) (interchain with G-Cter in SUMO2). Residues 59 to 124 (GPQEALSQLR…KEIVTLVEDF (66 aa)) enclose the SCAN box domain. The interval 150 to 270 (GSQLGEQELP…RRQVSSPNAQ (121 aa)) is disordered. Lys-204 participates in a covalent cross-link: Glycyl lysine isopeptide (Lys-Gly) (interchain with G-Cter in SUMO2). Residues 211-221 (PRMRSDNKENP) are compositionally biased toward basic and acidic residues. Residues Lys-230 and Lys-271 each participate in a glycyl lysine isopeptide (Lys-Gly) (interchain with G-Cter in SUMO2) cross-link. C2H2-type zinc fingers lie at residues 326–348 (YKCD…KRVH), 354–376 (YTCG…QRIH), and 382–405 (YQCG…RLHH).

The protein belongs to the krueppel C2H2-type zinc-finger protein family. Homodimer. As to expression, expressed in a variety of organs, but most strongly in adult testis and ovary followed by small intestine, colon, prostate, thymus, spleen, pancreas, skeletal muscle, heart, brain and kidney. Also expressed in umbilical vein endothelial cells, foreskin fibroblast and Hep-G2 cells.

It is found in the nucleus. In terms of biological role, transcriptional repressor. The chain is Zinc finger protein 174 (ZNF174) from Homo sapiens (Human).